A 309-amino-acid polypeptide reads, in one-letter code: GTP cyclohydrolase MptA (309 aa).

This sequence belongs to the GTP cyclohydrolase IV family. As to quaternary structure, homodimer. It depends on Fe(2+) as a cofactor.

It catalyses the reaction GTP + H2O = 7,8-dihydroneopterin 2',3'-cyclic phosphate + formate + diphosphate + H(+). It participates in cofactor biosynthesis; 5,6,7,8-tetrahydromethanopterin biosynthesis. Functionally, converts GTP to 7,8-dihydro-D-neopterin 2',3'-cyclic phosphate, the first intermediate in the biosynthesis of coenzyme methanopterin. In Haloarcula marismortui (strain ATCC 43049 / DSM 3752 / JCM 8966 / VKM B-1809) (Halobacterium marismortui), this protein is GTP cyclohydrolase MptA.